Here is a 251-residue protein sequence, read N- to C-terminus: Adenosylcobinamide-GDP ribazoletransferase (251 aa).

Helical transmembrane passes span 36–56 (LYPFIGLIIGALWYLSFFVLS), 60–80 (VPIMLMAALILTVPYILTGFL), 110–130 (VGAFSVISVVLLLLVEFAGMF), 141–161 (ILIFIPIASRVINGYFIVSQE), 181–201 (EIILLGIYVLVALITFFTLGI), 202–222 (NYLIAILAMGLISFILLLKVK), and 231–251 (DVAGYILVLMEFTGILLLGII).

It belongs to the CobS family. Mg(2+) serves as cofactor.

The protein resides in the cell membrane. It catalyses the reaction alpha-ribazole + adenosylcob(III)inamide-GDP = adenosylcob(III)alamin + GMP + H(+). It carries out the reaction alpha-ribazole 5'-phosphate + adenosylcob(III)inamide-GDP = adenosylcob(III)alamin 5'-phosphate + GMP + H(+). Its pathway is cofactor biosynthesis; adenosylcobalamin biosynthesis; adenosylcobalamin from cob(II)yrinate a,c-diamide: step 7/7. Joins adenosylcobinamide-GDP and alpha-ribazole to generate adenosylcobalamin (Ado-cobalamin). Also synthesizes adenosylcobalamin 5'-phosphate from adenosylcobinamide-GDP and alpha-ribazole 5'-phosphate. This chain is Adenosylcobinamide-GDP ribazoletransferase, found in Clostridium perfringens (strain ATCC 13124 / DSM 756 / JCM 1290 / NCIMB 6125 / NCTC 8237 / Type A).